A 401-amino-acid chain; its full sequence is Alternative oxidase, mitochondrial (401 aa).

Residues 53–81 are disordered; the sequence is KRASLSLQPSVREAEKSQGPVVGSEGRGV. Residues 184–204 form a helical membrane-spanning segment; that stretch reads LFRIILLESIAGVPGMVGGTL. Fe cation-binding residues include Glu191, Glu230, and His233. The chain crosses the membrane as a helical span at residues 249-269; the sequence is ALVLAAQGVFYNAFFLTYLIS. Positions 281, 282, 335, and 338 each coordinate Fe cation.

This sequence belongs to the alternative oxidase family. Fe cation serves as cofactor.

It is found in the mitochondrion inner membrane. Catalyzes cyanide-resistant oxygen consumption. May increase respiration when the cytochrome respiratory pathway is restricted, or in response to low temperatures. The protein is Alternative oxidase, mitochondrial (AOX1) of Cryptococcus neoformans var. grubii serotype A (strain H99 / ATCC 208821 / CBS 10515 / FGSC 9487) (Filobasidiella neoformans var. grubii).